The primary structure comprises 78 residues: D-alanyl carrier protein (78 aa).

The Carrier domain occupies 1-78 (MEFREQVLDL…KIVEALEELK (78 aa)). Ser36 carries the post-translational modification O-(pantetheine 4'-phosphoryl)serine.

This sequence belongs to the DltC family. 4'-phosphopantetheine is transferred from CoA to a specific serine of apo-DCP.

The protein localises to the cytoplasm. Its pathway is cell wall biogenesis; lipoteichoic acid biosynthesis. In terms of biological role, carrier protein involved in the D-alanylation of lipoteichoic acid (LTA). The loading of thioester-linked D-alanine onto DltC is catalyzed by D-alanine--D-alanyl carrier protein ligase DltA. The DltC-carried D-alanyl group is further transferred to cell membrane phosphatidylglycerol (PG) by forming an ester bond, probably catalyzed by DltD. D-alanylation of LTA plays an important role in modulating the properties of the cell wall in Gram-positive bacteria, influencing the net charge of the cell wall. The sequence is that of D-alanyl carrier protein from Staphylococcus carnosus (strain TM300).